Here is a 342-residue protein sequence, read N- to C-terminus: Dihydroorotase (342 aa).

Positions 13 and 15 each coordinate Zn(2+). Residues 15–17 (HLR) and Asn-41 each bind substrate. Residues Lys-98, His-135, and His-173 each coordinate Zn(2+). Position 98 is an N6-carboxylysine (Lys-98). His-135 is a substrate binding site. Leu-218 is a binding site for substrate. Asp-246 contacts Zn(2+). Asp-246 is a catalytic residue. Substrate contacts are provided by His-250 and Ala-262.

The protein belongs to the metallo-dependent hydrolases superfamily. DHOase family. Class II DHOase subfamily. In terms of assembly, homodimer. Requires Zn(2+) as cofactor.

It catalyses the reaction (S)-dihydroorotate + H2O = N-carbamoyl-L-aspartate + H(+). It participates in pyrimidine metabolism; UMP biosynthesis via de novo pathway; (S)-dihydroorotate from bicarbonate: step 3/3. Functionally, catalyzes the reversible cyclization of carbamoyl aspartate to dihydroorotate. This Vibrio atlanticus (strain LGP32) (Vibrio splendidus (strain Mel32)) protein is Dihydroorotase.